A 778-amino-acid chain; its full sequence is pH-response regulator protein palH/prr-4 (778 aa).

At 1 to 108 (MEPRQLFSDP…DPFYASTFPQ (108 aa)) the chain is on the extracellular side. The helical transmembrane segment at 109–129 (CYALAATTIIAYTLVIMLFIT) threads the bilayer. Topologically, residues 130-160 (PRSFLDGGVVVLGRKGFTNGGGGTSIGGRPW) are periplasmic. Residues 161-181 (LQKVAALSVAISLTIANAATF) form a helical membrane-spanning segment. The Extracellular segment spans residues 182–201 (RAAEQQYSWGVQNAKQLQED). The chain crosses the membrane as a helical span at residues 202–222 (VLGGAELKIIRIISDTFLWLA). At 223–237 (QAQTLIRLFPRQREK) the chain is on the periplasmic side. A helical membrane pass occupies residues 238–258 (VIIKWTAFALITLDVIFQSLN). The Extracellular portion of the chain corresponds to 259 to 275 (SFKYGGSDLTRPKFTEA). A helical membrane pass occupies residues 276–296 (VPALSYLFALALGVLYAAWVL). Residues 297 to 314 (YYSIMKKRYAFYHPLMKN) are Periplasmic-facing. The helical transmembrane segment at 315 to 335 (MILVAVLSVVSILVPVVFFIL) threads the bilayer. The Extracellular portion of the chain corresponds to 336–341 (DISKPD). A helical transmembrane segment spans residues 342 to 362 (FAGWGDYVRWVGAAAASVIVW). Residues 363 to 778 (EWVERIEALE…RSDSSTTPSP (416 aa)) lie on the Periplasmic side of the membrane. 3 disordered regions span residues 394–499 (ASQS…DTTS), 514–605 (ELTS…DENS), and 660–778 (ELNH…TPSP). The span at 446–456 (HRTEPSSRNEP) shows a compositional bias: basic and acidic residues. The segment covering 457 to 466 (NEGSSPVAET) has biased composition (polar residues). 2 stretches are compositionally biased toward basic and acidic residues: residues 588 to 605 (FVTRSEPRSSKMQRDENS) and 661 to 675 (LNHSSREGTVREESR). The span at 720-732 (PIVTQGSFTNNRY) shows a compositional bias: polar residues. Positions 749 to 759 (ARAPSQPQSPS) are enriched in low complexity. Over residues 769–778 (RSDSSTTPSP) the composition is skewed to polar residues.

This sequence belongs to the palH/RIM21 family.

Its subcellular location is the cell membrane. Its function is as follows. Required for the proteolytic cleavage of the transcription factor pacc-1 in response to alkaline ambient pH. The sequence is that of pH-response regulator protein palH/prr-4 (prr-4) from Neurospora crassa (strain ATCC 24698 / 74-OR23-1A / CBS 708.71 / DSM 1257 / FGSC 987).